The primary structure comprises 341 residues: DNA-directed RNA polymerase subunit alpha (341 aa).

The segment at 1-226 (MLIAQRPTIT…ELFGLVRELN (226 aa)) is alpha N-terminal domain (alpha-NTD). Residues 241-341 (AALAADLALP…DQRYIETEQL (101 aa)) form an alpha C-terminal domain (alpha-CTD) region.

The protein belongs to the RNA polymerase alpha chain family. In terms of assembly, homodimer. The RNAP catalytic core consists of 2 alpha, 1 beta, 1 beta' and 1 omega subunit. When a sigma factor is associated with the core the holoenzyme is formed, which can initiate transcription.

It catalyses the reaction RNA(n) + a ribonucleoside 5'-triphosphate = RNA(n+1) + diphosphate. In terms of biological role, DNA-dependent RNA polymerase catalyzes the transcription of DNA into RNA using the four ribonucleoside triphosphates as substrates. This is DNA-directed RNA polymerase subunit alpha from Acidothermus cellulolyticus (strain ATCC 43068 / DSM 8971 / 11B).